The primary structure comprises 809 residues: AP-3 complex subunit beta (809 aa).

5 HEAT repeats span residues 37 to 76 (YYSQNINPQQLVTLLNSRNSREVRDAMKRIISIMASDDDS), 112 to 151 (DPNLTLLSINSLQKSLSDSNSELRCFALSALSDMKMSSLA), 153 to 186 (IILHTVKKLVTDPSAMVRGEVALAIIKLYRAGKN), 187 to 224 (DYHEELLDILKELMADTDPKVISCAVLAYKECYADHLE), and 524 to 561 (KICPDVLRRLIQNFSNEGPETRCQILVLSAKLLSYDID). Residues S693, S698, S724, and S726 each carry the phosphoserine modification. Disordered regions lie at residues 708 to 739 (FTSSSNAKLTGINDGDSNSISGKGNVNTFTSQ) and 763 to 809 (PRKI…HLEL). The segment covering 722–739 (GDSNSISGKGNVNTFTSQ) has biased composition (polar residues). Residues 772–791 (ESSDEDEDESEESSDDDEYS) are compositionally biased toward acidic residues. A compositionally biased stretch (low complexity) spans 792–809 (DSSLGTSSSGTSSSHLEL).

It belongs to the adaptor complexes large subunit family. In terms of assembly, adaptor protein complex 3 (AP-3) is a heterotetramer composed of 2 large adaptins (APL5 and APL6), a medium adaptin (APM3) and a small adaptin (APS3). Post-translationally, pyrophosphorylated by 5-diphosphoinositol pentakisphosphate (5-IP7). Serine pyrophosphorylation is achieved by Mg(2+)-dependent, but enzyme independent transfer of a beta-phosphate from a inositol pyrophosphate to a pre-phosphorylated serine residue.

The protein localises to the golgi apparatus. The protein resides in the cytoplasmic vesicle. It is found in the clathrin-coated vesicle membrane. Part of the AP-3 complex, an adaptor-related complex which is not clathrin-associated. The complex is associated with the Golgi region as well as more peripheral structures. It facilitates the budding of vesicles from the Golgi membrane and may be directly involved in trafficking to the vacuole. Required for the transport via the ALP pathway, which directs the transport of the cargo proteins PHO8 and VAM3 to the vacuole. This Saccharomyces cerevisiae (strain ATCC 204508 / S288c) (Baker's yeast) protein is AP-3 complex subunit beta (APL6).